Consider the following 198-residue polypeptide: Small ribosomal subunit protein eS1 (198 aa).

It belongs to the eukaryotic ribosomal protein eS1 family.

This Methanospirillum hungatei JF-1 (strain ATCC 27890 / DSM 864 / NBRC 100397 / JF-1) protein is Small ribosomal subunit protein eS1.